Consider the following 404-residue polypeptide: Exodeoxyribonuclease 7 large subunit (404 aa).

The protein belongs to the XseA family. As to quaternary structure, heterooligomer composed of large and small subunits.

It is found in the cytoplasm. The enzyme catalyses Exonucleolytic cleavage in either 5'- to 3'- or 3'- to 5'-direction to yield nucleoside 5'-phosphates.. Bidirectionally degrades single-stranded DNA into large acid-insoluble oligonucleotides, which are then degraded further into small acid-soluble oligonucleotides. In Mesoplasma florum (strain ATCC 33453 / NBRC 100688 / NCTC 11704 / L1) (Acholeplasma florum), this protein is Exodeoxyribonuclease 7 large subunit.